Consider the following 276-residue polypeptide: 2-hydroxy-6-oxo-2,4-heptadienoate hydrolase (276 aa).

The region spanning 28–259 is the AB hydrolase-1 domain; the sequence is NPVVLVHGSG…GRCGHWVQIE (232 aa). Active-site residues include S105, D226, and H254.

Belongs to the DmpD/TodF/XylF esterase family.

The catalysed reaction is (2Z,4E)-2-hydroxy-6-oxohepta-2,4-dienoate + H2O = (2Z)-2-hydroxypenta-2,4-dienoate + acetate + H(+). It participates in xenobiotic degradation; toluene degradation. Catalyzes the hydrolysis of 2-hydroxy-6-oxohepta-2,4-dienoate into 2-hydroxypenta-2,4-dienoate and acetate. This Pseudomonas putida (strain ATCC 700007 / DSM 6899 / JCM 31910 / BCRC 17059 / LMG 24140 / F1) protein is 2-hydroxy-6-oxo-2,4-heptadienoate hydrolase (todF).